The primary structure comprises 277 residues: Undecaprenyl-diphosphatase (277 aa).

Transmembrane regions (helical) follow at residues 47–67 (FNII…RGKI), 85–105 (ANLL…ADLI), 108–128 (WLFN…VMLW), 187–207 (FSFF…GYVY), 218–238 (VFAV…RALL), and 249–269 (FAWY…FHLI).

It belongs to the UppP family.

Its subcellular location is the cell inner membrane. It carries out the reaction di-trans,octa-cis-undecaprenyl diphosphate + H2O = di-trans,octa-cis-undecaprenyl phosphate + phosphate + H(+). Functionally, catalyzes the dephosphorylation of undecaprenyl diphosphate (UPP). Confers resistance to bacitracin. In Pseudomonas aeruginosa (strain ATCC 15692 / DSM 22644 / CIP 104116 / JCM 14847 / LMG 12228 / 1C / PRS 101 / PAO1), this protein is Undecaprenyl-diphosphatase.